A 149-amino-acid chain; its full sequence is Large ribosomal subunit protein eL24A (149 aa).

Composition is skewed to basic and acidic residues over residues 93–102 and 116–125; these read KRNQRPEVRA and KAASESEKKA. Residues 93-149 are disordered; the sequence is KRNQRPEVRAAARAAALKQRKDKKAASESEKKAIKAKSAASSARGQAIKNAKAAARH.

The protein belongs to the eukaryotic ribosomal protein eL24 family. Component of the large ribosomal subunit (LSU). Mature yeast ribosomes consist of a small (40S) and a large (60S) subunit. The 40S small subunit contains 1 molecule of ribosomal RNA (18S rRNA) and at least 33 different proteins. The large 60S subunit contains 3 rRNA molecules (25S, 5.8S and 5S rRNA) and at least 46 different proteins.

The protein resides in the cytoplasm. In terms of biological role, component of the ribosome, a large ribonucleoprotein complex responsible for the synthesis of proteins in the cell. The small ribosomal subunit (SSU) binds messenger RNAs (mRNAs) and translates the encoded message by selecting cognate aminoacyl-transfer RNA (tRNA) molecules. The large subunit (LSU) contains the ribosomal catalytic site termed the peptidyl transferase center (PTC), which catalyzes the formation of peptide bonds, thereby polymerizing the amino acids delivered by tRNAs into a polypeptide chain. The nascent polypeptides leave the ribosome through a tunnel in the LSU and interact with protein factors that function in enzymatic processing, targeting, and the membrane insertion of nascent chains at the exit of the ribosomal tunnel. In Schizosaccharomyces pombe (strain 972 / ATCC 24843) (Fission yeast), this protein is Large ribosomal subunit protein eL24A (rpl2401).